Consider the following 261-residue polypeptide: Ribonuclease 3 (261 aa).

The RNase III domain maps to 20–144; the sequence is YFALYRMLGF…FIGAIYLDKG (125 aa). Glutamate 62 lines the Mg(2+) pocket. Residue aspartate 66 is part of the active site. Mg(2+) contacts are provided by asparagine 130 and glutamate 133. Residue glutamate 133 is part of the active site. The DRBM domain maps to 172-241; that stretch reads NFKSKLFEWC…SQMTWRKIRT (70 aa).

This sequence belongs to the ribonuclease III family. Homodimer. Requires Mg(2+) as cofactor.

The protein localises to the cytoplasm. The enzyme catalyses Endonucleolytic cleavage to 5'-phosphomonoester.. In terms of biological role, digests double-stranded RNA. Involved in the processing of primary rRNA transcript to yield the immediate precursors to the large and small rRNAs (23S and 16S). Processes some mRNAs, and tRNAs when they are encoded in the rRNA operon. Processes pre-crRNA and tracrRNA of type II CRISPR loci if present in the organism. In Azobacteroides pseudotrichonymphae genomovar. CFP2, this protein is Ribonuclease 3.